Reading from the N-terminus, the 286-residue chain is 4-hydroxybenzoate octaprenyltransferase (286 aa).

Transmembrane regions (helical) follow at residues 20–40 (IGTL…AGGM), 43–63 (LKVL…GCII), 95–115 (ILFA…NPLV), 142–162 (FLGV…TGEV), 167–187 (WWLF…YAMV), 210–230 (QIIG…GWAA), and 234–254 (LVYG…QKLI).

This sequence belongs to the UbiA prenyltransferase family. The cofactor is Mg(2+).

Its subcellular location is the cell inner membrane. The catalysed reaction is all-trans-octaprenyl diphosphate + 4-hydroxybenzoate = 4-hydroxy-3-(all-trans-octaprenyl)benzoate + diphosphate. The protein operates within cofactor biosynthesis; ubiquinone biosynthesis. Catalyzes the prenylation of para-hydroxybenzoate (PHB) with an all-trans polyprenyl group. Mediates the second step in the final reaction sequence of ubiquinone-8 (UQ-8) biosynthesis, which is the condensation of the polyisoprenoid side chain with PHB, generating the first membrane-bound Q intermediate 3-octaprenyl-4-hydroxybenzoate. In Shewanella sediminis (strain HAW-EB3), this protein is 4-hydroxybenzoate octaprenyltransferase.